Here is a 155-residue protein sequence, read N- to C-terminus: Glutaredoxin-related protein 5, mitochondrial (155 aa).

The N-terminal 14 residues, Met1–Ser14, are a transit peptide targeting the mitochondrion. Residues Gln42–Ser145 form the Glutaredoxin domain. Lys59 contacts glutathione. Cys67 is a [2Fe-2S] cluster binding site. Glutathione contacts are provided by residues Arg97–Lys101, Ile109, and Cys122–Asp123.

In terms of assembly, homodimer.

Its subcellular location is the mitochondrion. Functionally, monothiol glutaredoxin involved in mitochondrial iron-sulfur (Fe/S) cluster transfer. Receives iron-sulfur clusters from scaffold protein ISCU and mediates their transfer to apoproteins, to the 4Fe/FS cluster biosynthesis machinery, or export from mitochondrion. Required for normal hemoglobin biosynthesis. The protein is Glutaredoxin-related protein 5, mitochondrial (glrx5) of Danio rerio (Zebrafish).